Here is a 562-residue protein sequence, read N- to C-terminus: Arginine--tRNA ligase (562 aa).

The short motif at 136-146 (ANPTGPMHMGN) is the 'HIGH' region element.

Belongs to the class-I aminoacyl-tRNA synthetase family. In terms of assembly, monomer.

Its subcellular location is the cytoplasm. It carries out the reaction tRNA(Arg) + L-arginine + ATP = L-arginyl-tRNA(Arg) + AMP + diphosphate. The protein is Arginine--tRNA ligase (argS) of Caldanaerobacter subterraneus subsp. tengcongensis (strain DSM 15242 / JCM 11007 / NBRC 100824 / MB4) (Thermoanaerobacter tengcongensis).